A 190-amino-acid chain; its full sequence is MLSSVVIAASEEQHNPLIPEPADIVGSLICFVVILFFFWKLVLPRVKKLLDERAEAIEGNIAKADEAQHKAEALLEEYTAQLAEARADAAKIREQARTDGQKIVAEAKDTATAEAARVTASAQAQIEAERQTALVSLRGEVGSLAIDIASGVVGEVLTEDKKAQAIVDRFLADLEASEKATSNEKAGTAN.

The chain crosses the membrane as a helical span at residues 24-44 (IVGSLICFVVILFFFWKLVLP).

The protein belongs to the ATPase B chain family. As to quaternary structure, F-type ATPases have 2 components, F(1) - the catalytic core - and F(0) - the membrane proton channel. F(1) has five subunits: alpha(3), beta(3), gamma(1), delta(1), epsilon(1). F(0) has three main subunits: a(1), b(2) and c(10-14). The alpha and beta chains form an alternating ring which encloses part of the gamma chain. F(1) is attached to F(0) by a central stalk formed by the gamma and epsilon chains, while a peripheral stalk is formed by the delta and b chains.

The protein resides in the cell membrane. In terms of biological role, f(1)F(0) ATP synthase produces ATP from ADP in the presence of a proton or sodium gradient. F-type ATPases consist of two structural domains, F(1) containing the extramembraneous catalytic core and F(0) containing the membrane proton channel, linked together by a central stalk and a peripheral stalk. During catalysis, ATP synthesis in the catalytic domain of F(1) is coupled via a rotary mechanism of the central stalk subunits to proton translocation. Its function is as follows. Component of the F(0) channel, it forms part of the peripheral stalk, linking F(1) to F(0). This chain is ATP synthase subunit b, found in Leifsonia xyli subsp. xyli (strain CTCB07).